Reading from the N-terminus, the 406-residue chain is Tryptophan 2,3-dioxygenase (406 aa).

Ser-19 carries the post-translational modification Phosphoserine. Substrate-binding positions include 72 to 76 (FIITH) and Arg-144. His-328 is a binding site for heme. Position 342 (Thr-342) interacts with substrate.

Belongs to the tryptophan 2,3-dioxygenase family. In terms of assembly, homotetramer. Dimer of dimers. Heme is required as a cofactor.

It catalyses the reaction L-tryptophan + O2 = N-formyl-L-kynurenine. It participates in amino-acid degradation; L-tryptophan degradation via kynurenine pathway; L-kynurenine from L-tryptophan: step 1/2. In terms of biological role, heme-dependent dioxygenase that catalyzes the oxidative cleavage of the L-tryptophan (L-Trp) pyrrole ring and converts L-tryptophan to N-formyl-L-kynurenine. Catalyzes the oxidative cleavage of the indole moiety. The sequence is that of Tryptophan 2,3-dioxygenase from Mus musculus (Mouse).